A 429-amino-acid chain; its full sequence is Cytochrome bc1 complex Rieske iron-sulfur subunit (429 aa).

The tract at residues 1–45 (MSRADDDAVGVPPTCGGRSDEEERRIVPGPNPQDGAKDGAKATAV) is disordered. The next 3 membrane-spanning stretches (helical) occupy residues 96–116 (VAVW…IFLF), 137–157 (PLYG…AVLY), and 207–227 (FGVG…GGLI). Residues 316-410 (RNPVMLIRIK…ITIDTDGYLV (95 aa)) form the Rieske domain. Residues Cys353, His355, Cys372, and His375 each coordinate [2Fe-2S] cluster. Cys358 and Cys374 are oxidised to a cystine.

This sequence belongs to the Rieske iron-sulfur protein family. The cytochrome bc1 complex is composed of a cytochrome b (QcrB), the Rieske iron-sulfur protein (QcrA) and a diheme cytochrome c (QcrC) subunit. [2Fe-2S] cluster serves as cofactor.

The protein resides in the cell membrane. Iron-sulfur subunit of the cytochrome bc1 complex, an essential component of the respiratory electron transport chain required for ATP synthesis. The bc1 complex catalyzes the oxidation of menaquinol and the reduction of cytochrome c in the respiratory chain. The bc1 complex operates through a Q-cycle mechanism that couples electron transfer to generation of the proton gradient that drives ATP synthesis. The sequence is that of Cytochrome bc1 complex Rieske iron-sulfur subunit (qcrA) from Mycobacterium tuberculosis (strain CDC 1551 / Oshkosh).